We begin with the raw amino-acid sequence, 502 residues long: Lysine--tRNA ligase (502 aa).

Positions 403 and 410 each coordinate Mg(2+).

The protein belongs to the class-II aminoacyl-tRNA synthetase family. As to quaternary structure, homodimer. Mg(2+) serves as cofactor.

It is found in the cytoplasm. The enzyme catalyses tRNA(Lys) + L-lysine + ATP = L-lysyl-tRNA(Lys) + AMP + diphosphate. The chain is Lysine--tRNA ligase from Synechococcus sp. (strain CC9605).